Reading from the N-terminus, the 331-residue chain is Olfactory receptor 6S1 (331 aa).

The Extracellular segment spans residues 1 to 29 (MSPDGNHSSDPTEFVLAGLPNLNSARVEL). Asn6 is a glycosylation site (N-linked (GlcNAc...) asparagine). Residues 30-50 (FSVFLLVYLLNLTGNVLIVGV) form a helical membrane-spanning segment. The Cytoplasmic portion of the chain corresponds to 51 to 59 (VRADTRLQT). Residues 60–80 (PMYFFLGNLSCLEILLTSVII) form a helical membrane-spanning segment. Residues 81 to 99 (PKMLSNFLSRQHTISFAAC) are Extracellular-facing. Cys99 and Cys182 are joined by a disulfide. A helical membrane pass occupies residues 100–120 (ITQFYFYFFLGASEFLLLAVM). Topologically, residues 121 to 147 (SADRYLAICHPLRYPLLMSGAVCFRVA) are cytoplasmic. The helical transmembrane segment at 148–168 (LACWVGGLVPVLGPTVAVALL) threads the bilayer. At 169–207 (PFCKQGAVVQHFFCDSGPLLRLACTNTKKLEETDFVLAS) the chain is on the extracellular side. The chain crosses the membrane as a helical span at residues 208-228 (LVIVSSLLITAVSYGLIVLAV). Topologically, residues 229–242 (LSIPSASGRQKAFS) are cytoplasmic. A helical membrane pass occupies residues 243-263 (TCTSHLIVVTLFYGSAIFLYV). At 264–274 (RPSQSGSVDTN) the chain is on the extracellular side. The helical transmembrane segment at 275 to 295 (WAVTVITTFVTPLLNPFIYAL) threads the bilayer. The Cytoplasmic portion of the chain corresponds to 296-331 (RNEQVKEALKDMFRKVVAGVLGNLLLDKCLSEKAVK).

Belongs to the G-protein coupled receptor 1 family.

The protein localises to the cell membrane. In terms of biological role, odorant receptor. The protein is Olfactory receptor 6S1 (OR6S1) of Homo sapiens (Human).